The following is an 89-amino-acid chain: Small ribosomal subunit protein uS15 (89 aa).

The protein belongs to the universal ribosomal protein uS15 family. In terms of assembly, part of the 30S ribosomal subunit. Forms a bridge to the 50S subunit in the 70S ribosome, contacting the 23S rRNA.

Its function is as follows. One of the primary rRNA binding proteins, it binds directly to 16S rRNA where it helps nucleate assembly of the platform of the 30S subunit by binding and bridging several RNA helices of the 16S rRNA. In terms of biological role, forms an intersubunit bridge (bridge B4) with the 23S rRNA of the 50S subunit in the ribosome. The protein is Small ribosomal subunit protein uS15 of Chlorobium luteolum (strain DSM 273 / BCRC 81028 / 2530) (Pelodictyon luteolum).